A 509-amino-acid polypeptide reads, in one-letter code: 3-isopropylmalate dehydratase large subunit, chloroplastic (509 aa).

Over residues 1-24 (MASVISSSPFLCKSSSKSDLGISS) the composition is skewed to low complexity. A disordered region spans residues 1-25 (MASVISSSPFLCKSSSKSDLGISSF). The N-terminal 47 residues, 1–47 (MASVISSSPFLCKSSSKSDLGISSFPKSSQISIHRCQKKSISRKIVS), are a transit peptide targeting the chloroplast. Residues Cys-376, Cys-445, and Cys-448 each coordinate [4Fe-4S] cluster.

Belongs to the aconitase/IPM isomerase family. Heterodimer of the large LEUC/IIL1 subunit and the small LEUD (SSU1, SSU2 or SSU3) subunits. [4Fe-4S] cluster is required as a cofactor. As to expression, expressed in roots, leaves, stems and flowers. Expressed at low levels in siliques.

The protein localises to the plastid. It is found in the chloroplast stroma. It carries out the reaction (2R,3S)-3-isopropylmalate = (2S)-2-isopropylmalate. The enzyme catalyses a 2-(omega-methylsulfanyl)alkylmalate = a 2-(omega-methylsulfanyl)alkylmaleate + H2O. The catalysed reaction is 2-(3-methylsulfanyl)propylmalate = 2-(2-methylsulfanyl)propylmaleate + H2O. It catalyses the reaction a 3-(omega-methylsulfanyl)alkylmalate = a 2-(omega-methylsulfanyl)alkylmaleate + H2O. It carries out the reaction 2-(2-methylsulfanyl)ethylmalate = 2-(2-methylsulfanyl)ethylmaleate + H2O. The enzyme catalyses 3-(2-methylsulfanyl)ethylmalate = 2-(2-methylsulfanyl)ethylmaleate + H2O. The catalysed reaction is 3-(3-methylsulfanyl)propylmalate = 2-(2-methylsulfanyl)propylmaleate + H2O. Its pathway is amino-acid biosynthesis; L-leucine biosynthesis; L-leucine from 3-methyl-2-oxobutanoate: step 2/4. Its function is as follows. Catalyzes the isomerization between 2-isopropylmalate and 3-isopropylmalate, via the formation of 2-isopropylmaleate. Functions in both the biosynthesis of leucine and in the methionine chain elongation pathway of aliphatic glucosinolate formation. The chain is 3-isopropylmalate dehydratase large subunit, chloroplastic from Arabidopsis thaliana (Mouse-ear cress).